The following is a 634-amino-acid chain: Probable potassium transport system protein Kup (634 aa).

A run of 12 helical transmembrane segments spans residues 19 to 39 (AVGLMVGAVGVCYGDIGTSPL), 62 to 82 (VLSLIFWSLIWVVSIKYVIFV), 113 to 133 (FVVVAGLIGAALFYGDSMITP), 150 to 170 (GLEHWTVPLALIVLIGLFLIQ), 177 to 197 (IGILFGPVMVLWFGALAALGV), 225 to 245 (IGVAILGATVLALTGAEALYA), 259 to 279 (WFLLVLPALVLNYFGQGATIL), 291 to 311 (LLAPGWALLPMVALSTLATVI), 349 to 369 (IYIGGVNWALMVGVVLLVLGF), 379 to 399 (YGVAVTGTMLITTLLMGVVIW), 406 to 426 (LWLGVPFFCVMLAVDSLFFAA), and 431 to 451 (VVQGGAFPVIAGIVIFILMST).

Belongs to the HAK/KUP transporter (TC 2.A.72) family.

The protein resides in the cell inner membrane. The enzyme catalyses K(+)(in) + H(+)(in) = K(+)(out) + H(+)(out). Transport of potassium into the cell. Likely operates as a K(+):H(+) symporter. In Pseudomonas paraeruginosa (strain DSM 24068 / PA7) (Pseudomonas aeruginosa (strain PA7)), this protein is Probable potassium transport system protein Kup.